The primary structure comprises 263 residues: Inner membrane protein YpjD (263 aa).

The Periplasmic segment spans residues 1–3; that stretch reads MPV. A helical transmembrane segment spans residues 4–23; sequence FALLALVAYSVSLALIVPGL. The Cytoplasmic portion of the chain corresponds to 24–34; sequence LQKNGGWRRMA. The helical transmembrane segment at 35-54 threads the bilayer; the sequence is IISAVIALVCHAIALEARIL. Residues 55–63 are Periplasmic-facing; that stretch reads PDGDSGQNL. A helical membrane pass occupies residues 64-83; the sequence is SLLNVGSLVSLMICTVMTIV. The Cytoplasmic segment spans residues 84–89; the sequence is ASRNRG. A helical membrane pass occupies residues 90–109; it reads WLLLPIVYAFALINLALATF. Topologically, residues 110-123 are periplasmic; sequence MPNEYITHLEATPG. The helical transmembrane segment at 124 to 146 threads the bilayer; it reads MLVHIGLSLFSYATLIIAALYAL. At 147 to 181 the chain is on the cytoplasmic side; that stretch reads QLAWIDYQLKNKKLAFNQEMPPLMSIERKMFHITQ. A helical membrane pass occupies residues 182–201; that stretch reads IGVVLLTLTLCTGLFYMHNL. Residues 202–210 lie on the Periplasmic side of the membrane; the sequence is FSMENIDKA. A helical transmembrane segment spans residues 211-228; that stretch reads VLSIVAWFVYIVLLWGHY. The Cytoplasmic segment spans residues 229–236; the sequence is HEGWRGRR. Residues 237 to 259 form a helical membrane-spanning segment; the sequence is VVWFNVAGAVILTLAYFGSRIVQ. Residues 260–263 lie on the Periplasmic side of the membrane; that stretch reads QLIS.

It is found in the cell inner membrane. The polypeptide is Inner membrane protein YpjD (ypjD) (Escherichia coli O157:H7).